An 88-amino-acid chain; its full sequence is Small ribosomal subunit protein bS20 (88 aa).

This sequence belongs to the bacterial ribosomal protein bS20 family.

Its function is as follows. Binds directly to 16S ribosomal RNA. The polypeptide is Small ribosomal subunit protein bS20 (Clostridium botulinum (strain ATCC 19397 / Type A)).